Reading from the N-terminus, the 224-residue chain is 7-cyano-7-deazaguanine synthase (224 aa).

ATP is bound at residue 10–20; that stretch reads LSGGLDSATVV. Positions 189, 199, 202, and 205 each coordinate Zn(2+).

This sequence belongs to the QueC family. The cofactor is Zn(2+).

The enzyme catalyses 7-carboxy-7-deazaguanine + NH4(+) + ATP = 7-cyano-7-deazaguanine + ADP + phosphate + H2O + H(+). It participates in purine metabolism; 7-cyano-7-deazaguanine biosynthesis. In terms of biological role, catalyzes the ATP-dependent conversion of 7-carboxy-7-deazaguanine (CDG) to 7-cyano-7-deazaguanine (preQ(0)). The protein is 7-cyano-7-deazaguanine synthase of Pseudomonas fluorescens (strain SBW25).